The following is a 114-amino-acid chain: Putative ANKRD40 C-terminal-like protein (114 aa).

The chain is Putative ANKRD40 C-terminal-like protein from Homo sapiens (Human).